Reading from the N-terminus, the 427-residue chain is UDP-N-acetyl-D-mannosamine dehydrogenase (427 aa).

NAD(+) is bound by residues tyrosine 19, isoleucine 20, aspartate 39, arginine 44, threonine 91, and threonine 130. The UDP-N-acetyl-alpha-D-mannosaminouronate site is built by arginine 155, valine 156, lysine 207, asparagine 211, arginine 214, histidine 245, arginine 247, and glycine 258. Lysine 207 (proton donor/acceptor) is an active-site residue. The active-site Nucleophile is the cysteine 261. Tyrosine 318 and lysine 319 together coordinate UDP-N-acetyl-alpha-D-mannosaminouronate. Arginine 326 contacts NAD(+). Lysine 404 contacts UDP-N-acetyl-alpha-D-mannosaminouronate.

Belongs to the UDP-glucose/GDP-mannose dehydrogenase family. Homotetramer; probably dimer of dimers.

The catalysed reaction is UDP-N-acetyl-alpha-D-mannosamine + 2 NAD(+) + H2O = UDP-N-acetyl-alpha-D-mannosaminouronate + 2 NADH + 3 H(+). In terms of biological role, catalyzes the four-electron oxidation of UDP-N-acetyl-D-mannosamine (UDP-ManNAc), reducing NAD(+) and releasing UDP-N-acetylmannosaminuronic acid (UDP-ManNAcA). This is UDP-N-acetyl-D-mannosamine dehydrogenase (wecC) from Methanococcus vannielii (strain ATCC 35089 / DSM 1224 / JCM 13029 / OCM 148 / SB).